The following is a 347-amino-acid chain: Chlorophyllase type 0 (347 aa).

The signal sequence occupies residues 1-19 (MAKLLLLIFGVFIFVNSQA). Residues 20–30 (QTFPTILEKHN) constitute a propeptide that is removed on maturation. The short motif at 160–164 (GHSRG) is the GXSXG element. The Nucleophile role is filled by S162. The Charge relay system role is filled by D191. N-linked (GlcNAc...) asparagine glycans are attached at residues N215, N229, and N251. Residue H262 is the Charge relay system of the active site. The N-linked (GlcNAc...) asparagine glycan is linked to N321.

It belongs to the AB hydrolase superfamily. Lipase family.

It catalyses the reaction a chlorophyll + H2O = a chlorophyllide + phytol + H(+). It carries out the reaction chlorophyll a + H2O = phytol + chlorophyllide a + H(+). It functions in the pathway porphyrin-containing compound metabolism; chlorophyll degradation. Inhibited by diisopropyl fluorophosphate (DFP), phenylmethanesulfonyl fluoride (PMSF) or p-chloromercuribenzoic acid (PCMB), but not by N-ethylmaleimide (NEM) or iodoacetamide. Catalyzes the hydrolysis of ester bond in chlorophyll to yield chlorophyllide and phytol. The chain is Chlorophyllase type 0 from Chenopodium album (Fat hen).